A 210-amino-acid chain; its full sequence is Frataxin, mitochondrial (210 aa).

The transit peptide at 1 to 41 (MWTFGRRAVAGLLASPSPAQAQTLARAPRLAELAQLCSRRG) directs the protein to the mitochondrion.

Belongs to the frataxin family. In terms of assembly, component of the mitochondrial core iron-sulfur cluster (ISC) complex composed of NFS1, LYRM4, NDUFAB1, ISCU, FXN, and FDX2; this complex is a heterohexamer containing two copies of each monomer. Homodimer. Monomer (probable predominant form). Oligomer. Monomers and polymeric aggregates of &gt;1 MDa have been isolated from mitochondria. A small fraction of heterologous overexpressed recombinant frataxin forms high-molecular weight aggregates that incorporate iron. Interacts with LYRM4. Interacts (via ferrous form) with ISCU; the interaction is possible when both are bound to the dimeric form of the cysteine desulfurase complex (NFS1:LYRM4) and the interaction enhances FXN interaction to the dimeric form of the cysteine desulfurase complex (NFS1:LYRM4). Interacts with FECH; one iron-bound FXN monomer seems to interact with a FECH homodimer. Interacts with SDHA and SDHB. Interacts with ACO2; the interaction is dependent on citrate. Interacts with HSPA9. Interacts with ACO1. Interacts with ISCU (cytoplasmic form). Post-translationally, processed in two steps by mitochondrial processing peptidase (MPP). MPP first cleaves the precursor to intermediate form and subsequently converts the intermediate to yield frataxin mature form (frataxin(81-210)) which is the predominant form. The additional forms, frataxin(56-210) and frataxin(78-210), seem to be produced when the normal maturation process is impaired; their physiological relevance is unsure.

It localises to the mitochondrion. It is found in the cytoplasm. The protein localises to the cytosol. The catalysed reaction is 4 Fe(2+) + O2 + 4 H(+) = 4 Fe(3+) + 2 H2O. In terms of biological role, functions as an activator of persulfide transfer to the scaffoding protein ISCU as component of the core iron-sulfur cluster (ISC) assembly complex and participates to the [2Fe-2S] cluster assembly. Accelerates sulfur transfer from NFS1 persulfide intermediate to ISCU and to small thiols such as L-cysteine and glutathione leading to persulfuration of these thiols and ultimately sulfide release. Binds ferrous ion and is released from FXN upon the addition of both L-cysteine and reduced FDX2 during [2Fe-2S] cluster assembly. The core iron-sulfur cluster (ISC) assembly complex is involved in the de novo synthesis of a [2Fe-2S] cluster, the first step of the mitochondrial iron-sulfur protein biogenesis. This process is initiated by the cysteine desulfurase complex (NFS1:LYRM4:NDUFAB1) that produces persulfide which is delivered on the scaffold protein ISCU in a FXN-dependent manner. Then this complex is stabilized by FDX2 which provides reducing equivalents to accomplish the [2Fe-2S] cluster assembly. Finally, the [2Fe-2S] cluster is transferred from ISCU to chaperone proteins, including HSCB, HSPA9 and GLRX5. May play a role in the protection against iron-catalyzed oxidative stress through its ability to catalyze the oxidation of Fe(2+) to Fe(3+); the oligomeric form but not the monomeric form has in vitro ferroxidase activity. May be able to store large amounts of iron in the form of a ferrihydrite mineral by oligomerization; however, the physiological relevance is unsure as reports are conflicting and the function has only been shown using heterologous overexpression systems. May function as an iron chaperone protein that protects the aconitase [4Fe-4S]2+ cluster from disassembly and promotes enzyme reactivation. May play a role as a high affinity iron binding partner for FECH that is capable of both delivering iron to ferrochelatase and mediating the terminal step in mitochondrial heme biosynthesis. Its function is as follows. Modulates the RNA-binding activity of ACO1. May be involved in the cytoplasmic iron-sulfur protein biogenesis. May contribute to oxidative stress resistance and overall cell survival. In Macaca fascicularis (Crab-eating macaque), this protein is Frataxin, mitochondrial.